Consider the following 366-residue polypeptide: Putative [LysW]-aminoadipate semialdehyde/glutamate semialdehyde transaminase (366 aa).

Residues 90-91 (GT) and phenylalanine 117 contribute to the pyridoxal 5'-phosphate site. A substrate-binding site is contributed by arginine 120. A pyridoxal 5'-phosphate-binding site is contributed by 202 to 205 (DEVQ). Lysine 230 is modified (N6-(pyridoxal phosphate)lysine). Residue serine 254 coordinates substrate. A pyridoxal 5'-phosphate-binding site is contributed by threonine 255.

The protein belongs to the class-III pyridoxal-phosphate-dependent aminotransferase family. LysJ subfamily. As to quaternary structure, homodimer. Pyridoxal 5'-phosphate serves as cofactor.

Its subcellular location is the cytoplasm. It carries out the reaction [amino-group carrier protein]-C-terminal-gamma-(L-lysyl)-L-glutamate + 2-oxoglutarate = [amino-group carrier protein]-C-terminal-N-(1-carboxy-5-oxopentan-1-yl)-L-glutamine + L-glutamate. The catalysed reaction is [amino-group carrier protein]-C-terminal-gamma-(L-ornithyl)-L-glutamate + 2-oxoglutarate = [amino-group carrier protein]-C-terminal-gamma-(L-glutamyl-5-semialdehyde)-L-glutamate + L-glutamate. It participates in amino-acid biosynthesis; L-lysine biosynthesis via AAA pathway; L-lysine from L-alpha-aminoadipate (Thermus route): step 4/5. The protein operates within amino-acid biosynthesis; L-arginine biosynthesis. Functionally, involved in both the arginine and lysine biosynthetic pathways. In Pyrococcus horikoshii (strain ATCC 700860 / DSM 12428 / JCM 9974 / NBRC 100139 / OT-3), this protein is Putative [LysW]-aminoadipate semialdehyde/glutamate semialdehyde transaminase.